The following is a 474-amino-acid chain: Glutamate--tRNA ligase (474 aa).

Positions 10–20 (PSPTGYLHIGG) match the 'HIGH' region motif. Residues C107, C109, C134, and D136 each contribute to the Zn(2+) site. The 'KMSKS' region motif lies at 244–248 (RLSKR). K247 serves as a coordination point for ATP.

It belongs to the class-I aminoacyl-tRNA synthetase family. Glutamate--tRNA ligase type 1 subfamily. In terms of assembly, monomer. Zn(2+) is required as a cofactor.

It is found in the cytoplasm. It carries out the reaction tRNA(Glu) + L-glutamate + ATP = L-glutamyl-tRNA(Glu) + AMP + diphosphate. Catalyzes the attachment of glutamate to tRNA(Glu) in a two-step reaction: glutamate is first activated by ATP to form Glu-AMP and then transferred to the acceptor end of tRNA(Glu). This chain is Glutamate--tRNA ligase, found in Anaeromyxobacter dehalogenans (strain 2CP-C).